The chain runs to 619 residues: Chaperone protein HscA homolog (619 aa).

This sequence belongs to the heat shock protein 70 family.

Its function is as follows. Chaperone involved in the maturation of iron-sulfur cluster-containing proteins. Has a low intrinsic ATPase activity which is markedly stimulated by HscB. This is Chaperone protein HscA homolog from Shewanella amazonensis (strain ATCC BAA-1098 / SB2B).